Consider the following 174-residue polypeptide: F-box protein At1g70360 (174 aa).

In terms of domain architecture, F-box spans 136–174 (PPCFISLPRELKHKILESLPGVDIGTLACVSSELRDMAS).

The sequence is that of F-box protein At1g70360 from Arabidopsis thaliana (Mouse-ear cress).